A 326-amino-acid chain; its full sequence is Lipid droplet-associated hydrolase (326 aa).

Ser140 serves as the catalytic Nucleophile. Residues Asp272 and His301 each act as charge relay system in the active site.

It belongs to the AB hydrolase superfamily. LDAH family. Expressed in liver, adrenal gland, prostate, spleen, kidney, brown and white adipose tissue, testis and to a lesser extent in brain (at protein level). Expressed in peritoneal macrophages and bone marrow-derived macrophages (at protein level). Highly expressed in macrophage and foam cell-rich areas in atherosclerotic lesions (at protein level). mRNA, but no protein, expressed in heart and muscle.

It localises to the lipid droplet. The protein resides in the endoplasmic reticulum. The catalysed reaction is a cholesterol ester + H2O = cholesterol + a fatty acid + H(+). In terms of biological role, probable serine lipid hydrolase associated with lipid droplets. Has low cholesterol esterase activity. Appears to lack triglyceride lipase activity. Involved in cholesterol and triglyceride homeostasis; stimulates cellular triglyceride accumulation and cellular cholesterol release. Acts antagonistically with PNPLA2/ATGL in regulation of cellular lipid stores. May regulate triglyceride accumulation indirectly through stimulation of PNPLA2/ATGL ubiquitination and proteasomal degradation. Promotes microtubule-dependent lipid droplet fusion. Highly expressed in macrophage-rich areas in atherosclerotic lesions, suggesting that it could promote cholesterol ester turnover in macrophages. Its function is as follows. Stimulates cellular triglyceride accumulation and lipid droplet fusion. Associates with lipid droplets but does not stimulate cellular triglyceride accumulation, lipid droplet fusion or ATGL proteasomal degradation. The protein is Lipid droplet-associated hydrolase of Mus musculus (Mouse).